Reading from the N-terminus, the 590-residue chain is Glutamine--fructose-6-phosphate aminotransferase [isomerizing] (590 aa).

Cysteine 2 (nucleophile; for GATase activity) is an active-site residue. One can recognise a Glutamine amidotransferase type-2 domain in the interval 2-221; the sequence is CGIIGIVSSK…DGELGFITTS (220 aa). SIS domains follow at residues 286-422 and 445-580; these read IIAE…DNTN and IGEE…PDKP. The For Fru-6P isomerization activity role is filled by lysine 585.

As to quaternary structure, homodimer.

The protein localises to the cytoplasm. It catalyses the reaction D-fructose 6-phosphate + L-glutamine = D-glucosamine 6-phosphate + L-glutamate. Catalyzes the first step in hexosamine metabolism, converting fructose-6P into glucosamine-6P using glutamine as a nitrogen source. In Sulfolobus acidocaldarius (strain ATCC 33909 / DSM 639 / JCM 8929 / NBRC 15157 / NCIMB 11770), this protein is Glutamine--fructose-6-phosphate aminotransferase [isomerizing].